The following is a 188-amino-acid chain: Pyridoxal 5'-phosphate synthase subunit PdxT (188 aa).

L-glutamine is bound at residue 46 to 48; that stretch reads GES. Cys78 (nucleophile) is an active-site residue. L-glutamine-binding positions include Arg106 and 132–133; that span reads IR. Catalysis depends on charge relay system residues His169 and Glu171.

It belongs to the glutaminase PdxT/SNO family. As to quaternary structure, in the presence of PdxS, forms a dodecamer of heterodimers. Only shows activity in the heterodimer.

It catalyses the reaction aldehydo-D-ribose 5-phosphate + D-glyceraldehyde 3-phosphate + L-glutamine = pyridoxal 5'-phosphate + L-glutamate + phosphate + 3 H2O + H(+). The catalysed reaction is L-glutamine + H2O = L-glutamate + NH4(+). It functions in the pathway cofactor biosynthesis; pyridoxal 5'-phosphate biosynthesis. In terms of biological role, catalyzes the hydrolysis of glutamine to glutamate and ammonia as part of the biosynthesis of pyridoxal 5'-phosphate. The resulting ammonia molecule is channeled to the active site of PdxS. The polypeptide is Pyridoxal 5'-phosphate synthase subunit PdxT (Tropheryma whipplei (strain Twist) (Whipple's bacillus)).